Here is a 90-residue protein sequence, read N- to C-terminus: Acylphosphatase (90 aa).

The region spanning 4 to 90 is the Acylphosphatase-like domain; sequence TRRVRFYGRV…TEFQDFQIKR (87 aa). Active-site residues include R19 and N37.

The protein belongs to the acylphosphatase family.

The enzyme catalyses an acyl phosphate + H2O = a carboxylate + phosphate + H(+). The polypeptide is Acylphosphatase (acyP) (Thermoplasma volcanium (strain ATCC 51530 / DSM 4299 / JCM 9571 / NBRC 15438 / GSS1)).